The primary structure comprises 318 residues: 2-keto-3-deoxygluconate permease (318 aa).

10 consecutive transmembrane segments (helical) span residues 10–30, 42–62, 76–96, 105–125, 139–159, 163–183, 199–219, 224–244, 263–283, and 289–309; these read IPGG…TFTP, GLIT…GASI, VLVV…GTFL, MLAG…NGGL, AGAF…VILG, IATF…IGFA, VQTL…LSVI, FAGI…LILA, AGAA…FAPV, and ALVA…TALW.

The protein belongs to the KdgT transporter family.

It localises to the cell inner membrane. It carries out the reaction 2-dehydro-3-deoxy-D-gluconate(in) + H(+)(in) = 2-dehydro-3-deoxy-D-gluconate(out) + H(+)(out). Its function is as follows. Catalyzes the proton-dependent uptake of 2-keto-3-deoxygluconate (KDG) into the cell. This chain is 2-keto-3-deoxygluconate permease, found in Pectobacterium carotovorum subsp. carotovorum (Erwinia carotovora subsp. carotovora).